Here is a 1006-residue protein sequence, read N- to C-terminus: MSNSRNNRVMVEGVGARVVRGPDWKWGKQDGGEGHVGTVRSFESPEEVVVVWDNGTAANYRCSGAYDLRILDSAPTGIKHDGTMCDTCRQQPIIGIRWKCAECTNYDLCTVCYHGDKHHLRHRFYRITTPGSERVLLESRRKSKKITARGIFAGARVVRGVDWQWEDQDGGNGRRGKVTEIQDWSASSPHSAAYVLWDNGAKNLYRVGFEGMSDLKCVQDAKGGSFYRDHCPVLGEQNGNRNPGGLQIGDLVNIDLDLEIVQSLQHGHGGWTDGMFETLTTTGTVCGIDEDHDIVVQYPSGNRWTFNPAVLTKANIVRSGDAAQGAEGGTSQFQVGDLVQVCYDLERIKLLQRGHGEWAEAMLPTLGKVGRVQQIYSDSDLKVEVCGTSWTYNPAAVSKVAPAGSAISNASGERLSQLLKKLFETQESGDLNEELVKAAANGDVAKVEDLLKRPDVDVNGQCAGHTAMQAASQNGHVDILKLLLKQNVDVEAEDKDGDRAVHHAAFGDEGAVIEVLHRGSADLNARNKRRQTPLHIAVNKGHLQVVKTLLDFGCHPSLQDSEGDTPLHDAISKKRDDILAVLLEAGADVTITNNNGFNALHHAALRGNPSAMRVLLSKLPRPWIVDEKKDDGYTALHLAALNNHVEVAELLVHQGNANLDIQNVNQQTALHLAVERQHTQIVRLLVRAGAKLDIQDKDGDTPLHEALRHHTLSQLRQLQDMQDVGKVDAAWEPSKNTLIMGLGTQGAEKKSAASIACFLAANGADLSIRNKKGQSPLDLCPDPSLCKALAKCHKEKVSGQVGSRSPSMISNDSETLEECMVCSDMKRDTLFGPCGHIATCSLCSPRVKKCLICKEQVQSRTKIEECVVCSDKKAAVLFQPCGHMCACENCASLMKKCVQCRAVVERRVPFITCCGGKSSEDPSDEISSGNIPVLQKDKDNTNVNADVQKLQQQLQDIKEQTMCPVCLDRLKNMIFLCGHGTCQLCGDRMSECPICRKAIERRILLY.

Positions 6–74 constitute an MIB/HERC2 1 domain; that stretch reads NNRVMVEGVG…AYDLRILDSA (69 aa). Residues 80 to 132 form a ZZ-type zinc finger; sequence HDGTMCDTCRQQPIIGIRWKCAECTNYDLCTVCYHGDKHHLRHRFYRITTPGS. Positions 85, 88, 100, 103, 109, 112, 118, and 122 each coordinate Zn(2+). Positions 143–221 constitute an MIB/HERC2 2 domain; sequence SKKITARGIF…MSDLKCVQDA (79 aa). Serine 408 is modified (phosphoserine). ANK repeat units lie at residues 430–460, 463–492, 496–525, 529–558, 562–591, 595–627, 631–661, 665–694, and 698–729; these read DLNE…DVNG, AGHT…DVEA, DGDR…DLNA, RRQT…HPSL, EGDT…DVTI, NGFN…IVDE, DGYT…NLDI, NQQT…KLDI, and DGDT…KVDA. 2 RING-type zinc fingers span residues 819-854 and 866-901; these read CMVC…LICK and CVVC…VQCR. The stretch at 935 to 962 forms a coiled coil; the sequence is QKDKDNTNVNADVQKLQQQLQDIKEQTM. Residues 963-996 form an RING-type 3 zinc finger; sequence CPVCLDRLKNMIFLCGHGTCQLCGDRMSECPICR.

In terms of assembly, interacts with CEP131 and PCM1. Ubiquitinated; this modification is inhibited in response to cellular stress, such as ultraviolet light (UV) radiation or heat shock. Ubiquitinated; possibly via autoubiquitination. Detected in all tissues tested. Present in embryo, embryonic stem cells, bladder, skeletal muscle, bladder, uterus, testis, stomach, colon, ileum, trachea, lung, aorta, kidney, spleen, liver and vas deferens (at protein level). Highly expressed in testis.

The protein resides in the cytoplasm. Its subcellular location is the cytoskeleton. The protein localises to the microtubule organizing center. It is found in the centrosome. It localises to the centriolar satellite. The protein resides in the cell membrane. The enzyme catalyses S-ubiquitinyl-[E2 ubiquitin-conjugating enzyme]-L-cysteine + [acceptor protein]-L-lysine = [E2 ubiquitin-conjugating enzyme]-L-cysteine + N(6)-ubiquitinyl-[acceptor protein]-L-lysine.. It functions in the pathway protein modification; protein ubiquitination. Its function is as follows. E3 ubiquitin-protein ligase that mediates ubiquitination of Delta receptors, which act as ligands of Notch proteins. Positively regulates the Delta-mediated Notch signaling by ubiquitinating the intracellular domain of Delta, leading to endocytosis of Delta receptors. Involved in ubiquitination of centriolar satellite CEP131, CEP290 and PCM1 proteins and hence inhibits primary cilium formation in proliferating cells. Mediates 'Lys-63'-linked polyubiquitination of TBK1, which probably participates in kinase activation. Probably mediates ubiquitination and subsequent proteasomal degradation of DAPK1, thereby antagonizing anti-apoptotic effects of DAPK1 to promote TNF-induced apoptosis. This Mus musculus (Mouse) protein is E3 ubiquitin-protein ligase MIB1 (Mib1).